Reading from the N-terminus, the 406-residue chain is Isocitrate dehydrogenase [NADP] (406 aa).

NADP(+) contacts are provided by lysine 72, threonine 75, threonine 77, and arginine 82. D-threo-isocitrate is bound by residues serine 94, asparagine 96, arginine 100, glutamate 110, and arginine 132. Positions 250, 273, and 277 each coordinate Mn(2+). NADP(+) is bound by residues glycine 308, threonine 309, valine 310, histidine 313, and asparagine 326.

The protein belongs to the isocitrate and isopropylmalate dehydrogenases family. As to quaternary structure, homodimer. Requires Mg(2+) as cofactor. Mn(2+) is required as a cofactor.

It catalyses the reaction D-threo-isocitrate + NADP(+) = 2-oxoglutarate + CO2 + NADPH. In terms of biological role, catalyzes the oxidative decarboxylation of isocitrate to 2-oxoglutarate and carbon dioxide with the concomitant reduction of NADP(+). The polypeptide is Isocitrate dehydrogenase [NADP] (icd) (Sphingobium yanoikuyae (Sphingomonas yanoikuyae)).